We begin with the raw amino-acid sequence, 146 residues long: Leghemoglobin 1 (146 aa).

Positions 2–146 constitute a Globin domain; the sequence is GFTAQQDALV…LAAAIKKAMS (145 aa). A phosphoserine; by CCAMK mark is found at Ser-13 and Ser-14. A Nitrated tyrosine modification is found at Tyr-30. Phosphoserine; by CCAMK occurs at positions 45 and 55. Ser-45 lines the heme b pocket. Residue His-61 coordinates O2. Heme b-binding residues include Lys-64, His-93, and Lys-96. Ser-123 carries the post-translational modification Phosphoserine; by CCAMK. The residue at position 134 (Tyr-134) is a Nitrated tyrosine.

It belongs to the plant globin family. Monomer. Nitrated in effective nodules and particularly in hypoxic conditions; this mechanism may play a protective role in the symbiosis by buffering toxic peroxynitrite NO(2)(-). Nitration level decrease during nodule senescence. Post-translationally, phosphorylated by CCAMK at serine residues in a Ca(2+)-dependent manner; the phosphorylation at Ser-45 disrupts the molecular environment of its porphyrin ring oxygen binding pocket, thus leading to a reduced oxygen consumption and to the delivery of oxygen O(2) to symbiosomes. Specifically and strongly expressed in root nodules and at low levels in seedlings.

It is found in the cytoplasm. The protein resides in the cytosol. The protein localises to the nucleus. Its function is as follows. Leghemoglobin that reversibly binds oxygen O(2) through a pentacoordinated heme iron. In root nodules, facilitates the diffusion of oxygen to the bacteroids while preventing the bacterial nitrogenase from being inactivated by buffering dioxygen, nitric oxide and carbon monoxide, and promoting the formation of reactive oxygen species (ROS, e.g. H(2)O(2)). This role is essential for symbiotic nitrogen fixation (SNF). In Lotus japonicus (Lotus corniculatus var. japonicus), this protein is Leghemoglobin 1.